A 461-amino-acid chain; its full sequence is Dihydrolipoyl dehydrogenase (461 aa).

Residues 33–41, lysine 50, and alanine 112 each bind FAD; that span reads EAAEVGGVC. A disulfide bridge links cysteine 41 with cysteine 46. NAD(+)-binding positions include 173–177, glutamate 196, and 263–266; these read GGGAV and AVGR. Residues aspartate 306 and alanine 314 each coordinate FAD. Catalysis depends on histidine 437, which acts as the Proton acceptor.

Belongs to the class-I pyridine nucleotide-disulfide oxidoreductase family. In terms of assembly, homodimer. It depends on FAD as a cofactor.

The protein resides in the membrane. The catalysed reaction is N(6)-[(R)-dihydrolipoyl]-L-lysyl-[protein] + NAD(+) = N(6)-[(R)-lipoyl]-L-lysyl-[protein] + NADH + H(+). Its function is as follows. Has chromate reductase activity. This Thermus scotoductus (strain ATCC 700910 / SA-01) protein is Dihydrolipoyl dehydrogenase.